Reading from the N-terminus, the 100-residue chain is Urease subunit gamma (100 aa).

The protein belongs to the urease gamma subunit family. In terms of assembly, heterotrimer of UreA (gamma), UreB (beta) and UreC (alpha) subunits. Three heterotrimers associate to form the active enzyme.

The protein localises to the cytoplasm. The enzyme catalyses urea + 2 H2O + H(+) = hydrogencarbonate + 2 NH4(+). It functions in the pathway nitrogen metabolism; urea degradation; CO(2) and NH(3) from urea (urease route): step 1/1. This chain is Urease subunit gamma, found in Burkholderia ambifaria (strain MC40-6).